The primary structure comprises 753 residues: Photosystem I P700 chlorophyll a apoprotein A1 (753 aa).

The next 8 membrane-spanning stretches (helical) occupy residues 72–95 (IFSAHFGHLAIIFVWLSGAYFHGA), 158–181 (LYCTAIGGLVMAALMMFAGWFHYH), 197–221 (MNHHLAGLLGLGCLSWAGHQIHVSL), 293–311 (TAHHHLALAVLFIVAGHMY), 350–373 (WHAQLAINLAMLGSLSIIVAHHMY), 389–415 (LSLFTHHMWIGGFLIVGAGAHGAIFMV), 437–459 (AIISHLNWVCIFLGFHSFGLYVH), and 534–552 (FMVHHIHAFTIHVTALILL). Positions 576 and 585 each coordinate [4Fe-4S] cluster. Transmembrane regions (helical) follow at residues 592–613 (HVFLGLFWMYNSLSIVIFHFSW) and 667–689 (LSAYGLLFLGAHFIWAFSLMFLF). His-678 is a chlorophyll a' binding site. Met-686 and Tyr-694 together coordinate chlorophyll a. Trp-695 is a phylloquinone binding site. Residues 727-747 (AVGVAHYLLGGIVTTWAFFLA) traverse the membrane as a helical segment.

Belongs to the PsaA/PsaB family. The PsaA/B heterodimer binds the P700 chlorophyll special pair and subsequent electron acceptors. PSI consists of a core antenna complex that captures photons, and an electron transfer chain that converts photonic excitation into a charge separation. The cyanobacterial PSI reaction center is composed of one copy each of PsaA,B,C,D,E,F,I,J,K,L,M and X, and forms trimeric complexes. Requires PSI electron transfer chain: 5 chlorophyll a, 1 chlorophyll a', 2 phylloquinones and 3 4Fe-4S clusters. PSI core antenna: 90 chlorophyll a, 22 carotenoids, 3 phospholipids and 1 galactolipid. P700 is a chlorophyll a/chlorophyll a' dimer, A0 is one or more chlorophyll a, A1 is one or both phylloquinones and FX is a shared 4Fe-4S iron-sulfur center. as cofactor.

It is found in the cellular thylakoid membrane. The catalysed reaction is reduced [plastocyanin] + hnu + oxidized [2Fe-2S]-[ferredoxin] = oxidized [plastocyanin] + reduced [2Fe-2S]-[ferredoxin]. PsaA and PsaB bind P700, the primary electron donor of photosystem I (PSI), as well as the electron acceptors A0, A1 and FX. PSI is a plastocyanin/cytochrome c6-ferredoxin oxidoreductase, converting photonic excitation into a charge separation, which transfers an electron from the donor P700 chlorophyll pair to the spectroscopically characterized acceptors A0, A1, FX, FA and FB in turn. Oxidized P700 is reduced on the lumenal side of the thylakoid membrane by plastocyanin or cytochrome c6. The sequence is that of Photosystem I P700 chlorophyll a apoprotein A1 from Trichodesmium erythraeum (strain IMS101).